The following is a 317-amino-acid chain: Electron transfer flavoprotein subunit alpha (317 aa).

This sequence belongs to the ETF alpha-subunit/FixB family. In terms of assembly, heterodimer of an alpha and a beta subunit. FAD serves as cofactor.

The protein localises to the cytoplasm. It functions in the pathway lipid metabolism; butanoate metabolism. Functionally, part of an electron transfer flavoprotein involved in syntrophic growth of S.wolfei with butyrate. Probably receives electrons from butyryl-CoA dehydrogenases, and transfers them to the membrane-bound quinone oxidoreductase Swol_0698. The protein is Electron transfer flavoprotein subunit alpha of Syntrophomonas wolfei subsp. wolfei (strain DSM 2245B / Goettingen).